Here is a 616-residue protein sequence, read N- to C-terminus: MLLQIAEPGQSAVPHQHKLAVGIDLGTTNSLVASVRSGEAKTLPDMKGNVILPSVVQYQEDKICVGMNAYQSAAMDPQNTIISVKRLMGRSLKDIQARYPELPYQFSESENGLPVIQTAQGEVNPIQVSSEILKSLSRRAQDTLGGELEGVVITVPAYFDDAQRAGTKDAATLAGLNVLRLLNEPTAAAIAYGLDSGQEGVIAVYDLGGGTFDISILRLSKGVFEVLATGGDSALGGDDFDHVLAQWIKEQAGITSSLSSQEQRELLTLATQTKVALSDSDNVKISFKDWSGEISVELFNSLIQPLIKKTLMACRRALKDADITSEEVMEVVMVGGSTRTPFVRTSVGDYFGQTPLTSIDPDQVVAIGAAIQADILVGNKPDSEMLLLDVIPLSLGIETMGGLVEKIIPRNTTIPVAKAQEFTTFKDGQTGMMVHVVQGEREMVEDGRSLARFSLKGIPPMAAGAAHIRVTYQVDADGLLSVTAMEKSTGVQSHIQVKPSYGLSDNEVANMLKDSMTYAKEDMQARALAEQQVEADRVIEGLVVALNNDGDALLSKEEQAEILQAIEALITLRQGTDAQAIEDGIKKADEASQEFAARRMDASIRAALAGQSIDEV.

It belongs to the heat shock protein 70 family.

Its function is as follows. Chaperone involved in the maturation of iron-sulfur cluster-containing proteins. Has a low intrinsic ATPase activity which is markedly stimulated by HscB. The polypeptide is Chaperone protein HscA homolog (Aliivibrio fischeri (strain MJ11) (Vibrio fischeri)).